The chain runs to 116 residues: NADH-ubiquinone oxidoreductase chain 3 (116 aa).

3 helical membrane passes run 3 to 23, 56 to 76, and 85 to 105; these read LVIS…VVSF, FFLV…LLAL, and ATGT…GLIY.

The protein belongs to the complex I subunit 3 family.

The protein resides in the mitochondrion membrane. The enzyme catalyses a ubiquinone + NADH + 5 H(+)(in) = a ubiquinol + NAD(+) + 4 H(+)(out). Functionally, core subunit of the mitochondrial membrane respiratory chain NADH dehydrogenase (Complex I) that is believed to belong to the minimal assembly required for catalysis. Complex I functions in the transfer of electrons from NADH to the respiratory chain. The immediate electron acceptor for the enzyme is believed to be ubiquinone. This Formosania lacustris (Oriental stream loach) protein is NADH-ubiquinone oxidoreductase chain 3 (MT-ND3).